Here is a 205-residue protein sequence, read N- to C-terminus: Small ribosomal subunit protein uS4 (205 aa).

The tract at residues 18–49 is disordered; sequence NIWGRPKSPVNKREYGPGQHGQRRKGKLSDFG. In terms of domain architecture, S4 RNA-binding spans 94-157; it reads RRLDTVVYRA…KQLALVLEAN (64 aa).

It belongs to the universal ribosomal protein uS4 family. As to quaternary structure, part of the 30S ribosomal subunit. Contacts protein S5. The interaction surface between S4 and S5 is involved in control of translational fidelity.

Functionally, one of the primary rRNA binding proteins, it binds directly to 16S rRNA where it nucleates assembly of the body of the 30S subunit. With S5 and S12 plays an important role in translational accuracy. The protein is Small ribosomal subunit protein uS4 of Nitrobacter hamburgensis (strain DSM 10229 / NCIMB 13809 / X14).